The following is a 277-amino-acid chain: Tryptophan synthase alpha chain (277 aa).

Catalysis depends on proton acceptor residues glutamate 50 and aspartate 61.

The protein belongs to the TrpA family. In terms of assembly, tetramer of two alpha and two beta chains.

The enzyme catalyses (1S,2R)-1-C-(indol-3-yl)glycerol 3-phosphate + L-serine = D-glyceraldehyde 3-phosphate + L-tryptophan + H2O. It participates in amino-acid biosynthesis; L-tryptophan biosynthesis; L-tryptophan from chorismate: step 5/5. Its function is as follows. The alpha subunit is responsible for the aldol cleavage of indoleglycerol phosphate to indole and glyceraldehyde 3-phosphate. In Beijerinckia indica subsp. indica (strain ATCC 9039 / DSM 1715 / NCIMB 8712), this protein is Tryptophan synthase alpha chain.